The primary structure comprises 297 residues: 4-diphosphocytidyl-2-C-methyl-D-erythritol kinase (297 aa).

Lysine 14 is a catalytic residue. Residue 99-109 participates in ATP binding; sequence PVAAGIGGGSA. Residue aspartate 141 is part of the active site.

The protein belongs to the GHMP kinase family. IspE subfamily.

The enzyme catalyses 4-CDP-2-C-methyl-D-erythritol + ATP = 4-CDP-2-C-methyl-D-erythritol 2-phosphate + ADP + H(+). Its pathway is isoprenoid biosynthesis; isopentenyl diphosphate biosynthesis via DXP pathway; isopentenyl diphosphate from 1-deoxy-D-xylulose 5-phosphate: step 3/6. Catalyzes the phosphorylation of the position 2 hydroxy group of 4-diphosphocytidyl-2C-methyl-D-erythritol. The polypeptide is 4-diphosphocytidyl-2-C-methyl-D-erythritol kinase (Bradyrhizobium diazoefficiens (strain JCM 10833 / BCRC 13528 / IAM 13628 / NBRC 14792 / USDA 110)).